The following is a 125-amino-acid chain: Profilin-A (125 aa).

Serine 2 is modified (N-acetylserine).

Belongs to the profilin family. In terms of assembly, occurs in many kinds of cells as a complex with monomeric actin in a 1:1 ratio.

It is found in the cytoplasm. Its subcellular location is the cytoskeleton. Binds to actin and affects the structure of the cytoskeleton. At high concentrations, profilin prevents the polymerization of actin, whereas it enhances it at low concentrations. By binding to PIP2, it inhibits the formation of IP3 and DG. The chain is Profilin-A (PROA) from Physarum polycephalum (Slime mold).